We begin with the raw amino-acid sequence, 805 residues long: Transitional endoplasmic reticulum ATPase (805 aa).

Residue serine 3 is modified to Phosphoserine. ATP contacts are provided by residues 247–253, asparagine 348, histidine 384, and 521–526; these read PGTGKTL and GCGKTL. A disordered region spans residues 768–805; it reads FGSFRFPAGGQGGAGPSQGAGGGSGGSHFNEEEDDLYG. A compositionally biased stretch (gly residues) spans 776–793; the sequence is GGQGGAGPSQGAGGGSGG.

Belongs to the AAA ATPase family. Homohexamer. Forms a ring-shaped particle of 12.5 nm diameter, that displays 6-fold radial symmetry. Interacts with the FACT/DUF complex, which includes subunits ssrp1/duf87 and supt16h/duf140. Post-translationally, phosphorylated.

Its subcellular location is the cytoplasm. The protein localises to the cytosol. It localises to the endoplasmic reticulum. The protein resides in the nucleus. It is found in the stress granule. The enzyme catalyses ATP + H2O = ADP + phosphate + H(+). ATPase activity is inhibited or reduced by lowering pH from 9.0 to 7.0, and by addition of Ca(2+), EDTA, KNO(3) or by treatment with N-ethylmaleimide (NEM). Necessary for the fragmentation of Golgi stacks during mitosis and for their reassembly after mitosis. Involved in the formation of the nuclear envelope, and of the transitional endoplasmic reticulum (tER). The transfer of membranes from the endoplasmic reticulum to the Golgi apparatus occurs via 50-70 nm transition vesicles which derive from part-rough, part-smooth transitional elements of the endoplasmic reticulum (tER). Vesicle budding from the tER is an ATP-dependent process. Involved in endoplasmic reticulum stress-induced pre-emptive quality control, a mechanism that selectively attenuates the translocation of newly synthesized proteins into the endoplasmic reticulum and reroutes them to the cytosol for proteasomal degradation. Involved in clearance process by mediating G3BP1 extraction from stress granules. Also involved in DNA damage response: recruited to double-strand breaks (DSBs) sites and promotes the recruitment of tp53bp1 at DNA damage sites. Together with sprtn metalloprotease, involved in the repair of covalent DNA-protein cross-links (DPCs) during DNA synthesis. Involved in interstrand cross-link repair in response to replication stress by mediating unloading of the ubiquitinated CMG helicase complex. Enhances cell cycle progression and inhibits apoptosis at low temperatures. Essential for the maturation of ubiquitin-containing autophagosomes and the clearance of ubiquitinated protein by autophagy. Acts as a negative regulator of type I interferon production by promoting ubiquitination of rigi. May play a role in the ubiquitin-dependent sorting of membrane proteins to lysosomes where they undergo degradation. May more particularly play a role in caveolins sorting in cells. By controlling the steady-state expression of the IGF1R receptor, indirectly regulates the insulin-like growth factor receptor signaling pathway. The sequence is that of Transitional endoplasmic reticulum ATPase from Xenopus tropicalis (Western clawed frog).